Reading from the N-terminus, the 921-residue chain is Protein translocase subunit SecA (921 aa).

Residues Gln-87, Gly-105–Thr-109, and Asp-501 each bind ATP. The tract at residues Pro-831–Glu-886 is disordered. Residues Ala-872–Val-881 show a composition bias toward pro residues. The Zn(2+) site is built by Cys-905, Cys-907, Cys-916, and His-917.

Belongs to the SecA family. As to quaternary structure, monomer and homodimer. Part of the essential Sec protein translocation apparatus which comprises SecA, SecYEG and auxiliary proteins SecDF-YajC and YidC. Requires Zn(2+) as cofactor.

It localises to the cell inner membrane. The protein localises to the cytoplasm. It catalyses the reaction ATP + H2O + cellular proteinSide 1 = ADP + phosphate + cellular proteinSide 2.. In terms of biological role, part of the Sec protein translocase complex. Interacts with the SecYEG preprotein conducting channel. Has a central role in coupling the hydrolysis of ATP to the transfer of proteins into and across the cell membrane, serving both as a receptor for the preprotein-SecB complex and as an ATP-driven molecular motor driving the stepwise translocation of polypeptide chains across the membrane. The polypeptide is Protein translocase subunit SecA (Gluconobacter oxydans (strain 621H) (Gluconobacter suboxydans)).